The chain runs to 443 residues: L-seryl-tRNA(Sec) selenium transferase (443 aa).

Lys-285 is modified (N6-(pyridoxal phosphate)lysine).

Belongs to the SelA family. It depends on pyridoxal 5'-phosphate as a cofactor.

Its subcellular location is the cytoplasm. The enzyme catalyses L-seryl-tRNA(Sec) + selenophosphate + H(+) = L-selenocysteinyl-tRNA(Sec) + phosphate. The protein operates within aminoacyl-tRNA biosynthesis; selenocysteinyl-tRNA(Sec) biosynthesis; selenocysteinyl-tRNA(Sec) from L-seryl-tRNA(Sec) (bacterial route): step 1/1. Its function is as follows. Converts seryl-tRNA(Sec) to selenocysteinyl-tRNA(Sec) required for selenoprotein biosynthesis. The chain is L-seryl-tRNA(Sec) selenium transferase from Campylobacter lari (strain RM2100 / D67 / ATCC BAA-1060).